Reading from the N-terminus, the 109-residue chain is Parvalbumin alpha (109 aa).

Residue S1 is modified to N-acetylserine. 2 EF-hand domains span residues 38 to 73 (KSDA…FSDG) and 77 to 109 (LNDK…AKMT). D51, D53, S55, Y57, E59, E62, D90, D92, D94, K96, and E101 together coordinate Ca(2+).

It belongs to the parvalbumin family. As to quaternary structure, monomer.

Functionally, in muscle, parvalbumin is thought to be involved in relaxation after contraction. It binds two calcium ions. This chain is Parvalbumin alpha, found in Raja clavata (Thornback ray).